The chain runs to 1161 residues: Lethal(2) giant larvae protein (1161 aa).

The phospho-regulated basic and hydrophobic (PRBH) motif stretch occupies residues 15 to 86 (DRHRLQKDLF…NNSASELNVQ (72 aa)). 8 WD repeats span residues 39–72 (SALAYDPVLKLMAIGTQTGALKVFGQPGVELYGQ), 82–128 (ELNV…DGKL), 131–167 (VSSLCCSLSKDLLWIGTEGGNIYQLDLHTFTIKEPVI), 189–223 (SIRQLPNSPSKLLVAYNRGLCVLWDFESASVQRAY), 231–263 (SVGLTVNFEGSEFTWYHADGSYATWSIDNPEPP), 278–320 (SINR…GHKV), 328–358 (VIDFFVTFENNRDVAEVLVVLLEEELCAYDL), and 380–464 (TCNY…YNFK). Residues Ser-473 and Ser-484 each carry the phosphoserine modification. WD repeat units follow at residues 513–594 (KKIA…SGVL) and 603–664 (TCMA…LRES). At Ser-679 the chain carries Phosphoserine. 4 WD repeats span residues 708-778 (VRCL…KEIQ), 787-832 (GISI…LKPI), 837-927 (LTAN…LNAA), and 941-964 (CFTNSGEALYMMSSSELQRIALAT). A phosphoserine mark is found at Ser-808, Ser-869, Ser-876, Ser-887, Ser-889, and Ser-893. At Ser-1013 the chain carries Phosphoserine. The tract at residues 1141 to 1161 (EKTNGDNKIGTPKTAPEESQF) is disordered.

The protein belongs to the WD repeat L(2)GL family. In terms of assembly, may form multimeric complexes. Interacts with mahj. Interacts with aPKC; leading to phosphorylation. Interacts with ball. Post-translationally, phosphorylated by aPKC which lowers lipid affinity and promotes dissociation from the cell cortex. In developing oocytes, aPKC-mediated phosphorylation restricts activity to the oocyte posterior and is required for oocyte polarity formation. In terms of tissue distribution, expressed in the epithelial cells of the digestive tract and in gonads.

It is found in the cytoplasm. The protein resides in the cell cortex. In terms of biological role, essential for the development of polarized epithelia, for cell polarity associated with asymmetric cell division of neuroblasts during development, and for oocyte polarity formation. Promotes the formation of actin-rich projections at the oocyte cortex and the posterior enrichment of par-1 which is required for oocyte polarization. Regulates the localization of axis-specifying morphogens such as stau and grk. Its function is as follows. Has an essential role in control of cell proliferation and differentiation during development and could act as a tumor suppressor. Has an accessory function in control of cell proliferation and differentiation during development. The chain is Lethal(2) giant larvae protein (l(2)gl) from Drosophila melanogaster (Fruit fly).